The primary structure comprises 218 residues: 25 kDa calcium-binding protein (218 aa).

4 consecutive EF-hand domains span residues 24-59, 66-101, 128-163, and 171-206; these read GAKTVARRIFENYDKGRKGRIENTDCVPMITEAYKS, PSSDDIKAYHRVLDRNGDGIVTYQDIEELCIRYLTG, AKLDVARRLFKRYDKDGSGQLQDDEIAGLLKDTYAE, and PTKEDVKIWLQMADTNSDGSVSLEEYEDLIIKSLQK. Residues Asp37, Arg43, Asp48, Asp79, Asn81, Asp83, Asp90, Asp141, Asp143, Ser145, Gln147, Glu152, Asp184, Asn186, Asp188, Ser190, and Glu195 each contribute to the Ca(2+) site.

In terms of biological role, expected to play a crucial role in calcium-dependent regulation of ciliary movement. The chain is 25 kDa calcium-binding protein from Tetrahymena thermophila.